The sequence spans 214 residues: rRNA methyltransferase 2, mitochondrial (214 aa).

Residues 1-18 (MFSTKKSQGNLHKYIQRQ) constitute a mitochondrion transit peptide. S-adenosyl-L-methionine contacts are provided by residues 63 to 66 (PGSW), aspartate 83, 100 to 101 (DI), and aspartate 125. Residue lysine 169 is the Proton acceptor of the active site.

It belongs to the class I-like SAM-binding methyltransferase superfamily. RNA methyltransferase RlmE family.

Its subcellular location is the mitochondrion. It carries out the reaction a uridine in rRNA + S-adenosyl-L-methionine = a 2'-O-methyluridine in rRNA + S-adenosyl-L-homocysteine + H(+). In terms of biological role, S-adenosyl-L-methionine-dependent 2'-O-ribose methyltransferase that catalyzes the formation of 2'-O-methyluridine at position 808 (Um808) in the mitochondrial large subunit ribosomal RNA (mtLSU rRNA), a universally conserved modification in the peptidyl transferase domain of the mtLSU rRNA. This activity may require prior 2'-O-methylguanosine modification at position 809 (Gm809) by MRM3. Essential for late-stage assembly of mtLSU required for efficient translation of mitochondrial DNA encoded proteins; methyltransferase activity is not required for this function. Essential for mitochondrial respiratory function. This chain is rRNA methyltransferase 2, mitochondrial, found in Caenorhabditis elegans.